The following is a 205-amino-acid chain: Probable GTP-binding protein EngB (205 aa).

The EngB-type G domain occupies Gln27–Gly201. Residues Gly35 to Ser42, Gly62 to Leu66, Asp80 to Gly83, Thr147 to Asp150, and Phe180 to Ser182 contribute to the GTP site. The Mg(2+) site is built by Ser42 and Thr64.

It belongs to the TRAFAC class TrmE-Era-EngA-EngB-Septin-like GTPase superfamily. EngB GTPase family. It depends on Mg(2+) as a cofactor.

Functionally, necessary for normal cell division and for the maintenance of normal septation. The polypeptide is Probable GTP-binding protein EngB (Hamiltonella defensa subsp. Acyrthosiphon pisum (strain 5AT)).